The sequence spans 309 residues: Ferrochelatase (309 aa).

The Fe cation site is built by histidine 185 and glutamate 264.

Belongs to the ferrochelatase family.

Its subcellular location is the cytoplasm. The catalysed reaction is heme b + 2 H(+) = protoporphyrin IX + Fe(2+). Its pathway is porphyrin-containing compound metabolism; protoheme biosynthesis; protoheme from protoporphyrin-IX: step 1/1. Functionally, catalyzes the ferrous insertion into protoporphyrin IX. The chain is Ferrochelatase from Aquifex aeolicus (strain VF5).